Reading from the N-terminus, the 119-residue chain is Divalent-cation tolerance protein CutA (119 aa).

Positions 23, 90, and 91 each coordinate Cu cation.

Belongs to the CutA family. Homotrimer. Cu cation serves as cofactor.

It is found in the cytoplasm. Its function is as follows. Involved in resistance toward heavy metals. In Yersinia pseudotuberculosis serotype O:1b (strain IP 31758), this protein is Divalent-cation tolerance protein CutA.